The chain runs to 159 residues: MNIKIIGVGKLKEKYFRDGIAEYLKRMDKFAKVKIVEVADEKAPENLSEAEMADVKAKEGDRILGKIKDKEWVIALAIEGKQRPSEVFAKEIADLGTYGYSDITFVIGGSLGLSPAVMKRANDTLSFGKLTMPHQLMRLVLMEQIYRAFMINIGSPYHK.

S-adenosyl-L-methionine contacts are provided by residues L76, G108, and 127–132 (FGKLTM).

It belongs to the RNA methyltransferase RlmH family. Homodimer.

Its subcellular location is the cytoplasm. It catalyses the reaction pseudouridine(1915) in 23S rRNA + S-adenosyl-L-methionine = N(3)-methylpseudouridine(1915) in 23S rRNA + S-adenosyl-L-homocysteine + H(+). In terms of biological role, specifically methylates the pseudouridine at position 1915 (m3Psi1915) in 23S rRNA. The protein is Ribosomal RNA large subunit methyltransferase H of Lacticaseibacillus casei (strain BL23) (Lactobacillus casei).